A 300-amino-acid polypeptide reads, in one-letter code: Putative glycosyltransferase ORF300 (300 aa).

It belongs to the glycosyltransferase group 1 family. Glycosyltransferase 4 subfamily.

The polypeptide is Putative glycosyltransferase ORF300 (Acidianus hospitalis (AFV-1)).